A 309-amino-acid polypeptide reads, in one-letter code: THAP domain-containing protein 7 (309 aa).

The THAP-type zinc-finger motif lies at 1–93 (MPRHCSAAGC…LKEGAVPTIF (93 aa)). A disordered region spans residues 158-209 (TLPASPAGRLEPGLSSPFSDLLGPLGAQADEAGCSAQPSPERQPSPLEPRPV). Residue serine 162 is modified to Phosphoserine. Over residues 198 to 209 (ERQPSPLEPRPV) the composition is skewed to pro residues. Serine 210 is modified (phosphoserine). Residues 229 to 232 (EHSY) carry the HCFC1-binding motif (HBM) motif.

In terms of assembly, forms homodimers. Interacts with HDAC3 and nuclear hormone receptor corepressors. Interacts via HBM with HCFC1.

The protein localises to the nucleus. Its subcellular location is the chromosome. Chromatin-associated, histone tail-binding protein that represses transcription via recruitment of HDAC3 and nuclear hormone receptor corepressors. The polypeptide is THAP domain-containing protein 7 (THAP7) (Homo sapiens (Human)).